Reading from the N-terminus, the 482-residue chain is Glycogen synthase (482 aa).

Lysine 15 serves as a coordination point for ADP-alpha-D-glucose.

This sequence belongs to the glycosyltransferase 1 family. Bacterial/plant glycogen synthase subfamily.

It carries out the reaction [(1-&gt;4)-alpha-D-glucosyl](n) + ADP-alpha-D-glucose = [(1-&gt;4)-alpha-D-glucosyl](n+1) + ADP + H(+). It participates in glycan biosynthesis; glycogen biosynthesis. Synthesizes alpha-1,4-glucan chains using ADP-glucose. The sequence is that of Glycogen synthase from Elusimicrobium minutum (strain Pei191).